Reading from the N-terminus, the 328-residue chain is Extracellular exo-alpha-(1-&gt;5)-L-arabinofuranosidase (328 aa).

A signal peptide (tat-tyPE signal) is located at residues M1–A43. D60 (proton acceptor) is an active-site residue. The active-site Proton donor is the E236.

It belongs to the glycosyl hydrolase 43 family. In terms of processing, predicted to be exported by the Tat system. The position of the signal peptide cleavage has been experimentally proven.

The protein resides in the secreted. The catalysed reaction is Hydrolysis of terminal non-reducing alpha-L-arabinofuranoside residues in alpha-L-arabinosides.. The protein operates within glycan metabolism; L-arabinan degradation. Its function is as follows. Involved in the degradation of arabinan and is a key enzyme in the complete degradation of the plant cell wall. Catalyzes only the cleavage of terminal alpha-(1-&gt;5) arabinofuranosyl bonds of arabinan present in the arabinofuranosyl polysaccharides or oligosaccharides. It cannot act on other arabinose-containing polysaccharides and arabinoxylo-oligosaccharides. This is Extracellular exo-alpha-(1-&gt;5)-L-arabinofuranosidase from Streptomyces chartreusis.